Reading from the N-terminus, the 446-residue chain is Glutamine synthetase (446 aa).

The GS beta-grasp domain maps to 18–103 (ENVRYLRLQF…LICDVYKTDG (86 aa)). The region spanning 110–446 (PRANLKRVLK…WERDQYMKQY (337 aa)) is the GS catalytic domain. Mg(2+)-binding residues include E134 and E136. E186 is an ATP binding site. Mg(2+) is bound by residues E191 and E198. Residues 242–243 (NG) and G243 each bind L-glutamate. Residue H247 participates in Mg(2+) binding. Residue S251 participates in ATP binding. L-glutamate contacts are provided by R300, E306, and R318. ATP-binding residues include R318 and R323. E335 is a binding site for Mg(2+). Position 337 (R337) interacts with L-glutamate.

It belongs to the glutamine synthetase family. In terms of assembly, oligomer of 12 subunits arranged in the form of two hexagons. In its feedback-inhibited form, interacts with TnrA in order to block its DNA-binding activity. Requires Mg(2+) as cofactor.

It localises to the cytoplasm. The catalysed reaction is L-glutamate + NH4(+) + ATP = L-glutamine + ADP + phosphate + H(+). With respect to regulation, inhibited by glutamine. Functionally, glutamine synthetase (GS) is an unusual multitasking protein that functions as an enzyme, a transcription coregulator, and a chaperone in ammonium assimilation and in the regulation of genes involved in nitrogen metabolism. It catalyzes the ATP-dependent biosynthesis of glutamine from glutamate and ammonia. Feedback-inhibited GlnA also interacts with and regulates the activity of the transcriptional regulator TnrA. During nitrogen limitation, TnrA is in its DNA-binding active state and turns on the transcription of genes required for nitrogen assimilation. Under conditions of nitrogen excess, feedback-inhibited GlnA forms a stable complex with TnrA, which inhibits its DNA-binding activity. In contrast, feedback-inhibited GlnA acts as a chaperone to stabilize the DNA-binding activity of GlnR, which represses the transcription of nitrogen assimilation genes. This chain is Glutamine synthetase, found in Staphylococcus aureus (strain MRSA252).